The chain runs to 343 residues: Cyclin-Y-like protein 1 (343 aa).

The segment at 1 to 48 (MGNTVTCCVSPDASPKAGRDRAVTERGEPYQAQVELQETDPGPHLQHI) is disordered. The span at 17 to 28 (AGRDRAVTERGE) shows a compositional bias: basic and acidic residues. One can recognise a Cyclin N-terminal domain in the interval 145–267 (EIFDEKLHPL…FLELLQFNIN (123 aa)).

This sequence belongs to the cyclin family. Cyclin Y subfamily.

It is found in the cell membrane. Functionally, key regulator of Wnt signaling implicated in various biological processes, such as embryonic neurogenesis. The protein is Cyclin-Y-like protein 1 (ccnyl1) of Xenopus tropicalis (Western clawed frog).